The sequence spans 555 residues: GPI-anchor transamidase component PIGS (555 aa).

Residues 2 to 18 (AATGAAATDLEVVRGKR) are Cytoplasmic-facing. R15 and R18 together coordinate a cardiolipin. A helical membrane pass occupies residues 19 to 39 (AALFFATVVIVLGLPLWWKTT). Topologically, residues 40 to 517 (ETYRAPLPYS…LHLLYFPDDQ (478 aa)) are lumenal. N267 and N370 each carry an N-linked (GlcNAc...) asparagine glycan. The helical transmembrane segment at 518–532 (KFAIYIPLFLPMAVP) threads the bilayer. At 533–555 (ILLSLFKIFLETRKSWKKPEKTD) the chain is on the cytoplasmic side.

The protein belongs to the PIGS family. In terms of assembly, heteropentamer. Part of the GPI-anchor transamidase complex, consisting of PIGK, PIGT, PIGS, PIGU and GAA1.

It localises to the endoplasmic reticulum membrane. It participates in glycolipid biosynthesis; glycosylphosphatidylinositol-anchor biosynthesis. Its function is as follows. Component of the glycosylphosphatidylinositol-anchor (GPI-anchor) transamidase (GPI-T) complex that catalyzes the formation of the linkage between a proprotein and a GPI-anchor and participates in GPI anchored protein biosynthesis. In Bos taurus (Bovine), this protein is GPI-anchor transamidase component PIGS.